A 155-amino-acid polypeptide reads, in one-letter code: Ribosomal RNA large subunit methyltransferase H (155 aa).

S-adenosyl-L-methionine-binding positions include leucine 72, glycine 103, and 122–127; that span reads LSALTL.

It belongs to the RNA methyltransferase RlmH family. As to quaternary structure, homodimer.

Its subcellular location is the cytoplasm. The catalysed reaction is pseudouridine(1915) in 23S rRNA + S-adenosyl-L-methionine = N(3)-methylpseudouridine(1915) in 23S rRNA + S-adenosyl-L-homocysteine + H(+). In terms of biological role, specifically methylates the pseudouridine at position 1915 (m3Psi1915) in 23S rRNA. This Shigella boydii serotype 18 (strain CDC 3083-94 / BS512) protein is Ribosomal RNA large subunit methyltransferase H.